Reading from the N-terminus, the 110-residue chain is Large ribosomal subunit protein uL22 (110 aa).

This sequence belongs to the universal ribosomal protein uL22 family. Part of the 50S ribosomal subunit.

Its function is as follows. This protein binds specifically to 23S rRNA; its binding is stimulated by other ribosomal proteins, e.g. L4, L17, and L20. It is important during the early stages of 50S assembly. It makes multiple contacts with different domains of the 23S rRNA in the assembled 50S subunit and ribosome. In terms of biological role, the globular domain of the protein is located near the polypeptide exit tunnel on the outside of the subunit, while an extended beta-hairpin is found that lines the wall of the exit tunnel in the center of the 70S ribosome. In Histophilus somni (strain 129Pt) (Haemophilus somnus), this protein is Large ribosomal subunit protein uL22.